The following is a 299-amino-acid chain: Ribosomal RNA small subunit methyltransferase H (299 aa).

S-adenosyl-L-methionine is bound by residues 24–26 (GGH), aspartate 43, phenylalanine 68, aspartate 90, and glutamine 97.

It belongs to the methyltransferase superfamily. RsmH family.

Its subcellular location is the cytoplasm. It carries out the reaction cytidine(1402) in 16S rRNA + S-adenosyl-L-methionine = N(4)-methylcytidine(1402) in 16S rRNA + S-adenosyl-L-homocysteine + H(+). Its function is as follows. Specifically methylates the N4 position of cytidine in position 1402 (C1402) of 16S rRNA. In Francisella tularensis subsp. tularensis (strain WY96-3418), this protein is Ribosomal RNA small subunit methyltransferase H.